The sequence spans 106 residues: Large ribosomal subunit protein uL24 (106 aa).

The protein belongs to the universal ribosomal protein uL24 family. In terms of assembly, part of the 50S ribosomal subunit.

Functionally, one of two assembly initiator proteins, it binds directly to the 5'-end of the 23S rRNA, where it nucleates assembly of the 50S subunit. Its function is as follows. One of the proteins that surrounds the polypeptide exit tunnel on the outside of the subunit. In Bordetella avium (strain 197N), this protein is Large ribosomal subunit protein uL24.